We begin with the raw amino-acid sequence, 1071 residues long: MGVLNISDQPPLVQAIFNRNADEVKLFLHKKDEVNALDQERRTPLHAAAWLGDVHIMDLLISAGANVNAKDHVWLTPLHRAAASRNERAVGLLLRKGADVTARDKYWQTPLHIAAANRATRCVETLLPHVSSLNMADRTGRAPLHHAAQSGYQEMVKLLLNKGANLSASDKKDRQPIHWAAYLGHLEVVKLLVSQGSDKSCKDKRGYTPLHAAAASGHVDVVKYLLRNGAEIDEPNAFGNTALHVACYTGQEAVANELVNRGANVNQPNHRGYTPLHLAAVSTNGALCLELLVNNGADVNMQSKEGKSPLHMAAIHGRFTRSQILIQNGGEIDCVDRYGNTPLHVAAKYGHELLISTLMTNGADTARQGIHGMFPLHLAVLYGSSDCCRKLLSSGQLYSIVLSMSKEHVLSAGFDINTPDNFGRTCLHAAASGGNIECLNLLLSSGADMNKKDKFGRTPLHYAAANGRYQCVVVLVGAGAEVNERDRSGCTPLHYSAASTAFCRTDRPHASTHQNQEDGEKESFLCVEHLLDNGADPCLCNTKGYSAVHYAAAHGNKQNLELLLEMCFNTLGDKESNGSISPLHLAVESGHWECVTVLIESGVCVDVCDPVGRSVLYLASQRGHSRCVELLLSQSASCLLAEHRSKWGPLHVAAANGHSECLRMLLCSEGGADLVNVTDAEGQTPLMLAVLGGHTDCVHLLLERGACPDMKDRRGRTALHRGAVMGREDCLTALLSHNVSVLSRDFQGRSALHLAASCGHADILSNLLSAADHSQPQDPLTDRHGYTPAHWAAYHGHEDCLEVLLELKPCSIQEGNPFTPLHCALINGHSGSAELLLESSVCNSLVNIRDAKGRTPLHAAAVAEDVAGLQLVLRQGADIDAVDHSGRSALMVAADYGQSGAVALLLHRAKADLSLLDVNKNTALHLACSKAHEMCAMLILKEIHNPILINATNSMLQMPLHIAARNGLATVVQALLNRGATVLAVDEEGHTPALACASNKAVADCLALILSTMKPSSSTASSSSPSSPSLNLLKHCGITAACPPLPNGGLRHGYGKDRHGATIGLDGCLTE.

ANK repeat units follow at residues 7 to 36 (SDQPPLVQAIFNRNADEVKLFLHKKDEVNA), 40 to 69 (ERRTPLHAAAWLGDVHIMDLLISAGANVNA), 73 to 102 (VWLTPLHRAAASRNERAVGLLLRKGADVTA), 106 to 135 (YWQTPLHIAAANRATRCVETLLPHVSSLNM), 139 to 168 (TGRAPLHHAAQSGYQEMVKLLLNKGANLSA), 172 to 201 (KDRQPIHWAAYLGHLEVVKLLVSQGSDKSC), 205 to 234 (RGYTPLHAAAASGHVDVVKYLLRNGAEIDE), 238 to 267 (FGNTALHVACYTGQEAVANELVNRGANVNQ), 271 to 301 (RGYTPLHLAAVSTNGALCLELLVNNGADVNM), 305 to 334 (EGKSPLHMAAIHGRFTRSQILIQNGGEIDC), 338 to 367 (YGNTPLHVAAKYGHELLISTLMTNGADTAR), 371 to 400 (HGMFPLHLAVLYGSSDCCRKLLSSGQLYSI), 422 to 451 (FGRTCLHAAASGGNIECLNLLLSSGADMNK), 455 to 484 (FGRTPLHYAAANGRYQCVVVLVGAGAEVNE), 488 to 539 (SGCT…DPCL), 543 to 573 (KGYSAVHYAAAHGNKQNLELLLEMCFNTLGD), 578 to 607 (GSISPLHLAVESGHWECVTVLIESGVCVDV), 611 to 640 (VGRSVLYLASQRGHSRCVELLLSQSASCLL), 645 to 674 (SKWGPLHVAAANGHSECLRMLLCSEGGADL), 681 to 710 (EGQTPLMLAVLGGHTDCVHLLLERGACPDM), 714 to 743 (RGRTALHRGAVMGREDCLTALLSHNVSVLS), 747 to 776 (QGRSALHLAASCGHADILSNLLSAADHSQP), 784 to 814 (HGYTPAHWAAYHGHEDCLEVLLELKPCSIQE), 816 to 845 (NPFTPLHCALINGHSGSAELLLESSVCNSL), 852 to 881 (KGRTPLHAAAVAEDVAGLQLVLRQGADIDA), 885 to 915 (SGRSALMVAADYGQSGAVALLLHRAKADLSL), 919 to 951 (NKNTALHLACSKAHEMCAMLILKEIHNPILINA), and 955 to 984 (MLQMPLHIAARNGLATVVQALLNRGATVLA).

In terms of assembly, protein phosphatase 6 (PP6) holoenzyme is proposed to be a heterotrimeric complex formed by the catalytic subunit, a SAPS domain-containing subunit (PP6R) and an ankyrin repeat-domain containing regulatory subunit (ARS).

Functionally, putative regulatory subunit of protein phosphatase 6 (PP6) that may be involved in the recognition of phosphoprotein substrates. This chain is Serine/threonine-protein phosphatase 6 regulatory ankyrin repeat subunit C (ankrd52), found in Danio rerio (Zebrafish).